Here is a 705-residue protein sequence, read N- to C-terminus: Phosphoribosylformylglycinamidine synthase subunit PurL (705 aa).

Residue His32 is part of the active site. Residue Tyr35 coordinates ATP. Glu76 serves as a coordination point for Mg(2+). Residues 77–80 (SHNH) and Arg99 each bind substrate. Catalysis depends on His78, which acts as the Proton acceptor. Position 100 (Asp100) interacts with Mg(2+). Gln224 contributes to the substrate binding site. Asp252 serves as a coordination point for Mg(2+). 296-298 (ESQ) is a substrate binding site. ATP contacts are provided by Asp471 and Gly508. Asn509 is a binding site for Mg(2+). Ser511 is a substrate binding site.

The protein belongs to the FGAMS family. Monomer. Part of the FGAM synthase complex composed of 1 PurL, 1 PurQ and 2 PurS subunits.

The protein localises to the cytoplasm. The enzyme catalyses N(2)-formyl-N(1)-(5-phospho-beta-D-ribosyl)glycinamide + L-glutamine + ATP + H2O = 2-formamido-N(1)-(5-O-phospho-beta-D-ribosyl)acetamidine + L-glutamate + ADP + phosphate + H(+). The protein operates within purine metabolism; IMP biosynthesis via de novo pathway; 5-amino-1-(5-phospho-D-ribosyl)imidazole from N(2)-formyl-N(1)-(5-phospho-D-ribosyl)glycinamide: step 1/2. Functionally, part of the phosphoribosylformylglycinamidine synthase complex involved in the purines biosynthetic pathway. Catalyzes the ATP-dependent conversion of formylglycinamide ribonucleotide (FGAR) and glutamine to yield formylglycinamidine ribonucleotide (FGAM) and glutamate. The FGAM synthase complex is composed of three subunits. PurQ produces an ammonia molecule by converting glutamine to glutamate. PurL transfers the ammonia molecule to FGAR to form FGAM in an ATP-dependent manner. PurS interacts with PurQ and PurL and is thought to assist in the transfer of the ammonia molecule from PurQ to PurL. The sequence is that of Phosphoribosylformylglycinamidine synthase subunit PurL from Pyrococcus horikoshii (strain ATCC 700860 / DSM 12428 / JCM 9974 / NBRC 100139 / OT-3).